Reading from the N-terminus, the 234-residue chain is Endonuclease V (234 aa).

D46 and D116 together coordinate Mg(2+).

The protein belongs to the endonuclease V family. Mg(2+) is required as a cofactor.

The protein resides in the cytoplasm. It carries out the reaction Endonucleolytic cleavage at apurinic or apyrimidinic sites to products with a 5'-phosphate.. In terms of biological role, DNA repair enzyme involved in the repair of deaminated bases. Selectively cleaves double-stranded DNA at the second phosphodiester bond 3' to a deoxyinosine leaving behind the intact lesion on the nicked DNA. This is Endonuclease V from Clostridium acetobutylicum (strain ATCC 824 / DSM 792 / JCM 1419 / IAM 19013 / LMG 5710 / NBRC 13948 / NRRL B-527 / VKM B-1787 / 2291 / W).